Consider the following 477-residue polypeptide: UDP-galactose-lipid carrier transferase (477 aa).

The next 6 membrane-spanning stretches (helical) occupy residues 16 to 36, 52 to 72, 93 to 113, 115 to 135, 175 to 195, and 284 to 304; these read SLAL…IVLI, LDLK…WFWV, TILI…WELS, WIWI…RACV, VIAF…GVPV, and FDLV…VILI. Residues 305 to 477 are Cytoplasmic-facing; that stretch reads FMVSRDGGAP…GVVLKRDGAY (173 aa).

Belongs to the bacterial sugar transferase family.

The protein localises to the cell membrane. The protein operates within glycan metabolism; exopolysaccharide biosynthesis. Functionally, involved in the biosynthesis of amylovoran which functions as a virulence factor. May act as a sugar transferase and may be involved in the export of the repeating unit by flipping the lipid carrier to the periplasmic face of the inner membrane. In Erwinia amylovora (Fire blight bacteria), this protein is UDP-galactose-lipid carrier transferase (amsG).